Here is a 567-residue protein sequence, read N- to C-terminus: Zinc finger protein 512 (567 aa).

Residues Met-1–Gln-34 are disordered. Residues Lys-18 and Lys-84 each participate in a glycyl lysine isopeptide (Lys-Gly) (interchain with G-Cter in SUMO2) cross-link. The tract at residues Ala-87 to Pro-148 is disordered. The span at Lys-119 to Pro-130 shows a compositional bias: basic residues. The segment at Phe-197 to His-220 adopts a C2H2-type 1 zinc-finger fold. A Glycyl lysine isopeptide (Lys-Gly) (interchain with G-Cter in SUMO2) cross-link involves residue Lys-227. A C2H2-type 2 zinc finger spans residues Leu-287–His-310. A Glycyl lysine isopeptide (Lys-Gly) (interchain with G-Cter in SUMO2) cross-link involves residue Lys-333. The C2H2-type 3; atypical zinc finger occupies Ile-406–Cys-430. A C2H2-type 3 zinc finger spans residues Tyr-440–His-463. Residues Lys-485 to Arg-494 are compositionally biased toward basic and acidic residues. The disordered stretch occupies residues Lys-485–Lys-567. Over residues Arg-495–Gln-508 the composition is skewed to basic residues. The segment covering Val-523–Glu-544 has biased composition (basic and acidic residues). The span at Arg-556–Lys-567 shows a compositional bias: basic residues.

The protein belongs to the krueppel C2H2-type zinc-finger protein family.

The protein resides in the nucleus. Its function is as follows. May be involved in transcriptional regulation. The sequence is that of Zinc finger protein 512 (ZNF512) from Bos taurus (Bovine).